We begin with the raw amino-acid sequence, 355 residues long: 3-dehydroquinate synthase (355 aa).

NAD(+) is bound by residues glutamate 71–lysine 76, glycine 105–aspartate 109, threonine 129–serine 130, lysine 142, and lysine 151. Zn(2+)-binding residues include glutamate 184, histidine 246, and histidine 263.

It belongs to the sugar phosphate cyclases superfamily. Dehydroquinate synthase family. The cofactor is Co(2+). Requires Zn(2+) as cofactor. NAD(+) is required as a cofactor.

It localises to the cytoplasm. It catalyses the reaction 7-phospho-2-dehydro-3-deoxy-D-arabino-heptonate = 3-dehydroquinate + phosphate. The protein operates within metabolic intermediate biosynthesis; chorismate biosynthesis; chorismate from D-erythrose 4-phosphate and phosphoenolpyruvate: step 2/7. Catalyzes the conversion of 3-deoxy-D-arabino-heptulosonate 7-phosphate (DAHP) to dehydroquinate (DHQ). The polypeptide is 3-dehydroquinate synthase (Streptococcus pneumoniae (strain ATCC 700669 / Spain 23F-1)).